A 262-amino-acid polypeptide reads, in one-letter code: Global transcriptional regulator CodY (262 aa).

Residues 1–159 are GAF domain; the sequence is MATLLEKTRK…ATTVIGVQLS (159 aa). Positions 207–226 form a DNA-binding region, H-T-H motif; the sequence is ASVIADKIGITRSVIVNALR.

It belongs to the CodY family.

The protein localises to the cytoplasm. Functionally, DNA-binding global transcriptional regulator which is involved in the adaptive response to starvation and acts by directly or indirectly controlling the expression of numerous genes in response to nutrient availability. During rapid exponential growth, CodY is highly active and represses genes whose products allow adaptation to nutrient depletion. The polypeptide is Global transcriptional regulator CodY (Lactococcus lactis subsp. cremoris (strain SK11)).